The chain runs to 189 residues: MLYLASRSLCRRQLLQRLDIPFQVIDLEIPEVRREDELPQDYVRRVAQEKAQVGLARVRDAFAPKVLGADTEVVLDGRVFGKPADLVEAAAMLAALSGRTHQVMTAVSLVAAGGVAAQVLVVSEVSFALLSQGQIARYVDSGEPMGKAGAYAIQGRGECFVSRLVGSYSGVMGLPLQQTAQLLTTFEES.

Residue aspartate 70 is the Proton acceptor of the active site.

The protein belongs to the Maf family. A divalent metal cation is required as a cofactor.

It localises to the cytoplasm. The enzyme catalyses a ribonucleoside 5'-triphosphate + H2O = a ribonucleoside 5'-phosphate + diphosphate + H(+). It carries out the reaction a 2'-deoxyribonucleoside 5'-triphosphate + H2O = a 2'-deoxyribonucleoside 5'-phosphate + diphosphate + H(+). Nucleoside triphosphate pyrophosphatase. May have a dual role in cell division arrest and in preventing the incorporation of modified nucleotides into cellular nucleic acids. This chain is Nucleoside triphosphate pyrophosphatase, found in Xylella fastidiosa (strain 9a5c).